An 811-amino-acid polypeptide reads, in one-letter code: Tail spike protein (811 aa).

BNR repeat units follow at residues 150–161 (VKSGDDGQTWST) and 286–293 (NAGKNWHM). Residues glutamate 371 and arginine 386 contribute to the active site. Residues 398–409 (HRSRDIGQTWES) form a BNR 3 repeat. The active site involves arginine 437. One can recognise a Peptidase S74 domain in the interval 706–808 (SDADHKYGIS…DKLEEMYATN (103 aa)).

The protein belongs to the glycosyl hydrolase 58 family. In terms of assembly, homotrimer. Interacts with sialic acid. Interacts with adapter protein gp37. Interacts with gp46. The N-terminus is blocked. Post-translationally, proteolytic cleavage and release of the chaperone in the host cytosol stabilizes the folded protein. The cleavage gives rise to the mature tail spike protein but is not essential for catalytic activity. However, release of the chaperone domain confers kinetic stability and processivity to the endosialidase.

Its subcellular location is the virion. It catalyses the reaction Endohydrolysis of (2-&gt;8)-alpha-sialosyl linkages in oligo- or poly(sialic) acids.. In terms of biological role, receptor binding protein, which mediates the attachment to the host capsule. Degrades the alpha-2,8-linked polysialic acid K1-type capsule by cleaving within the polymer chain of polysialic acid. The C-terminal chaperone protein mediates homotrimerization and proper folding of the catalytic endosialidase trimer. This is Tail spike protein (GP90) from Escherichia phage K1E (Bacteriophage K1E).